The following is a 328-amino-acid chain: Pyruvate dehydrogenase E1 component subunit beta (328 aa).

Glutamate 60 contacts thiamine diphosphate. 3 residues coordinate K(+): isoleucine 113, isoleucine 162, and asparagine 166.

Heterodimer of an alpha and a beta chain. Thiamine diphosphate serves as cofactor.

The protein localises to the plastid. The protein resides in the chloroplast. It catalyses the reaction N(6)-[(R)-lipoyl]-L-lysyl-[protein] + pyruvate + H(+) = N(6)-[(R)-S(8)-acetyldihydrolipoyl]-L-lysyl-[protein] + CO2. In terms of biological role, the pyruvate dehydrogenase complex catalyzes the overall conversion of pyruvate to acetyl-CoA and CO(2). It contains multiple copies of three enzymatic components: pyruvate dehydrogenase (E1), dihydrolipoamide acetyltransferase (E2) and lipoamide dehydrogenase (E3). This is Pyruvate dehydrogenase E1 component subunit beta (pdhB) from Staurastrum punctulatum (Green alga).